The chain runs to 262 residues: Ribosomal RNA small subunit methyltransferase A (262 aa).

Residues histidine 13, leucine 15, glycine 40, glutamate 61, aspartate 85, and asparagine 103 each coordinate S-adenosyl-L-methionine.

Belongs to the class I-like SAM-binding methyltransferase superfamily. rRNA adenine N(6)-methyltransferase family. RsmA subfamily.

The protein localises to the cytoplasm. It carries out the reaction adenosine(1518)/adenosine(1519) in 16S rRNA + 4 S-adenosyl-L-methionine = N(6)-dimethyladenosine(1518)/N(6)-dimethyladenosine(1519) in 16S rRNA + 4 S-adenosyl-L-homocysteine + 4 H(+). In terms of biological role, specifically dimethylates two adjacent adenosines (A1518 and A1519) in the loop of a conserved hairpin near the 3'-end of 16S rRNA in the 30S particle. May play a critical role in biogenesis of 30S subunits. The sequence is that of Ribosomal RNA small subunit methyltransferase A from Bordetella petrii (strain ATCC BAA-461 / DSM 12804 / CCUG 43448).